Consider the following 125-residue polypeptide: Small ribosomal subunit protein uS13 (125 aa).

This sequence belongs to the universal ribosomal protein uS13 family. As to quaternary structure, part of the 30S ribosomal subunit. Forms a loose heterodimer with protein S19. Forms two bridges to the 50S subunit in the 70S ribosome.

Located at the top of the head of the 30S subunit, it contacts several helices of the 16S rRNA. In the 70S ribosome it contacts the 23S rRNA (bridge B1a) and protein L5 of the 50S subunit (bridge B1b), connecting the 2 subunits; these bridges are implicated in subunit movement. Contacts the tRNAs in the A and P-sites. This Rickettsia africae (strain ESF-5) protein is Small ribosomal subunit protein uS13.